The chain runs to 253 residues: 5'/3'-nucleotidase SurE (253 aa).

The a divalent metal cation site is built by Asp8, Asp9, Ser39, and Asn92.

The protein belongs to the SurE nucleotidase family. Requires a divalent metal cation as cofactor.

It localises to the cytoplasm. It carries out the reaction a ribonucleoside 5'-phosphate + H2O = a ribonucleoside + phosphate. The catalysed reaction is a ribonucleoside 3'-phosphate + H2O = a ribonucleoside + phosphate. It catalyses the reaction [phosphate](n) + H2O = [phosphate](n-1) + phosphate + H(+). Its function is as follows. Nucleotidase with a broad substrate specificity as it can dephosphorylate various ribo- and deoxyribonucleoside 5'-monophosphates and ribonucleoside 3'-monophosphates with highest affinity to 3'-AMP. Also hydrolyzes polyphosphate (exopolyphosphatase activity) with the preference for short-chain-length substrates (P20-25). Might be involved in the regulation of dNTP and NTP pools, and in the turnover of 3'-mononucleotides produced by numerous intracellular RNases (T1, T2, and F) during the degradation of various RNAs. In Salmonella paratyphi A (strain AKU_12601), this protein is 5'/3'-nucleotidase SurE.